An 81-amino-acid polypeptide reads, in one-letter code: ATP synthase subunit c, chloroplastic (81 aa).

Transmembrane regions (helical) follow at residues 3 to 23 (PIISAASVIAAGLAVGLASIG) and 57 to 77 (LAFMEALTIYGLVVALALLFA).

The protein belongs to the ATPase C chain family. F-type ATPases have 2 components, F(1) - the catalytic core - and F(0) - the membrane proton channel. F(1) has five subunits: alpha(3), beta(3), gamma(1), delta(1), epsilon(1). F(0) has four main subunits: a(1), b(1), b'(1) and c(10-14). The alpha and beta chains form an alternating ring which encloses part of the gamma chain. F(1) is attached to F(0) by a central stalk formed by the gamma and epsilon chains, while a peripheral stalk is formed by the delta, b and b' chains.

It is found in the plastid. It localises to the chloroplast thylakoid membrane. F(1)F(0) ATP synthase produces ATP from ADP in the presence of a proton or sodium gradient. F-type ATPases consist of two structural domains, F(1) containing the extramembraneous catalytic core and F(0) containing the membrane proton channel, linked together by a central stalk and a peripheral stalk. During catalysis, ATP synthesis in the catalytic domain of F(1) is coupled via a rotary mechanism of the central stalk subunits to proton translocation. Functionally, key component of the F(0) channel; it plays a direct role in translocation across the membrane. A homomeric c-ring of between 10-14 subunits forms the central stalk rotor element with the F(1) delta and epsilon subunits. The polypeptide is ATP synthase subunit c, chloroplastic (Welwitschia mirabilis (Tree tumbo)).